The sequence spans 454 residues: Isthmin-1 (454 aa).

The N-terminal stretch at 1-29 (MVRLAAELLLLLGLLLLTLHITVLRGSGA) is a signal peptide. Disordered stretches follow at residues 29–93 (ASDR…PRSF), 125–144 (PDSEAEKDQHPENKPSWSLP), and 161–209 (TNSG…STDG). The span at 38 to 55 (GNNNLNLESDSTSETSFP) shows a compositional bias: polar residues. Residues 128 to 137 (EAEKDQHPEN) are compositionally biased toward basic and acidic residues. The region spanning 208–252 (DGEGDWSLWSVCSVTCGNGNQKRTRSCGYACIATESRTCDRPNCP) is the TSP type-1 domain. Intrachain disulfides connect cysteine 219/cysteine 246, cysteine 223/cysteine 251, and cysteine 234/cysteine 238. The region spanning 279-442 (LFEVDMDSCE…QKCTESPSDE (164 aa)) is the AMOP domain.

Belongs to the isthmin family. In terms of assembly, interacts with integrin ITGAV/ITGB5.

It localises to the secreted. In terms of biological role, acts as an angiogenesis inhibitor. The chain is Isthmin-1 (Ism1) from Mus musculus (Mouse).